The following is a 1070-amino-acid chain: DNA-directed RNA polymerase subunit beta (1070 aa).

This sequence belongs to the RNA polymerase beta chain family. In terms of assembly, in plastids the minimal PEP RNA polymerase catalytic core is composed of four subunits: alpha, beta, beta', and beta''. When a (nuclear-encoded) sigma factor is associated with the core the holoenzyme is formed, which can initiate transcription.

It is found in the plastid. The protein localises to the chloroplast. It catalyses the reaction RNA(n) + a ribonucleoside 5'-triphosphate = RNA(n+1) + diphosphate. DNA-dependent RNA polymerase catalyzes the transcription of DNA into RNA using the four ribonucleoside triphosphates as substrates. This is DNA-directed RNA polymerase subunit beta from Lotus japonicus (Lotus corniculatus var. japonicus).